The chain runs to 334 residues: Anthranilate phosphoribosyltransferase (334 aa).

5-phospho-alpha-D-ribose 1-diphosphate is bound by residues G79, G82–D83, S87, N89–T92, K107–S115, and S119. An anthranilate-binding site is contributed by G79. A Mg(2+)-binding site is contributed by S91. An anthranilate-binding site is contributed by N110. Residue R165 participates in anthranilate binding. Mg(2+) contacts are provided by D224 and E225.

The protein belongs to the anthranilate phosphoribosyltransferase family. Homodimer. Mg(2+) serves as cofactor.

It carries out the reaction N-(5-phospho-beta-D-ribosyl)anthranilate + diphosphate = 5-phospho-alpha-D-ribose 1-diphosphate + anthranilate. Its pathway is amino-acid biosynthesis; L-tryptophan biosynthesis; L-tryptophan from chorismate: step 2/5. Functionally, catalyzes the transfer of the phosphoribosyl group of 5-phosphorylribose-1-pyrophosphate (PRPP) to anthranilate to yield N-(5'-phosphoribosyl)-anthranilate (PRA). This chain is Anthranilate phosphoribosyltransferase, found in Streptococcus sanguinis (strain SK36).